A 481-amino-acid polypeptide reads, in one-letter code: GTPase Obg (481 aa).

Residues threonine 2–valine 159 form the Obg domain. Residues alanine 160–alanine 330 form the OBG-type G domain. GTP-binding positions include glycine 166–serine 173, phenylalanine 191–valine 195, aspartate 212–glycine 215, asparagine 282–aspartate 285, and serine 311–alanine 313. Positions 173 and 193 each coordinate Mg(2+). The region spanning proline 348 to proline 426 is the OCT domain. The interval aspartate 440–glutamate 481 is disordered. Positions glutamate 469–glutamate 481 are enriched in acidic residues.

It belongs to the TRAFAC class OBG-HflX-like GTPase superfamily. OBG GTPase family. In terms of assembly, monomer. Requires Mg(2+) as cofactor.

The protein resides in the cytoplasm. Its function is as follows. An essential GTPase which binds GTP, GDP and possibly (p)ppGpp with moderate affinity, with high nucleotide exchange rates and a fairly low GTP hydrolysis rate. Plays a role in control of the cell cycle, stress response, ribosome biogenesis and in those bacteria that undergo differentiation, in morphogenesis control. The protein is GTPase Obg of Salinispora arenicola (strain CNS-205).